The sequence spans 377 residues: MSKRDYYEVLGVGRDASEREIKKAYKRLAMKFHPDRNPGDKAAEASFKEVKEAYEILTDANKKAAYDQFGHAGVDPNRGGGGGYGGAGDFGDIFGDVFGDIFGGGRRGGQRQAARGSDLRYNLELSLEEAVKGLTKELRIPTLASCDVCDGSGAKKGSSATTCGTCHGQGQVQMRQGFFTVQQPCPTCHGRGKIIKDPCSKCHGDGRVEKTKTLSVKIPAGVDTGDRIRLAGEGEAGEFGAPPGDLYVQVTVREHAIFVRDGNNLYCEVPISFSKAALGGEIEVPTLDGKVSLKIPAETQTGRMFRLRGKGVKSVRSHAVGDLLCKVVMETPVNLNERQKELLREFEATLTGESKKHSPKAEGFFDGVKKFFQDLNS.

The J domain maps to 5–70 (DYYEVLGVGR…NKKAAYDQFG (66 aa)). The CR-type zinc finger occupies 133-211 (GLTKELRIPT…CHGDGRVEKT (79 aa)). Zn(2+) contacts are provided by cysteine 146, cysteine 149, cysteine 163, cysteine 166, cysteine 185, cysteine 188, cysteine 199, and cysteine 202. CXXCXGXG motif repeat units lie at residues 146–153 (CDVCDGSG), 163–170 (CGTCHGQG), 185–192 (CPTCHGRG), and 199–206 (CSKCHGDG).

Belongs to the DnaJ family. Homodimer. The cofactor is Zn(2+).

It localises to the cytoplasm. Its function is as follows. Participates actively in the response to hyperosmotic and heat shock by preventing the aggregation of stress-denatured proteins and by disaggregating proteins, also in an autonomous, DnaK-independent fashion. Unfolded proteins bind initially to DnaJ; upon interaction with the DnaJ-bound protein, DnaK hydrolyzes its bound ATP, resulting in the formation of a stable complex. GrpE releases ADP from DnaK; ATP binding to DnaK triggers the release of the substrate protein, thus completing the reaction cycle. Several rounds of ATP-dependent interactions between DnaJ, DnaK and GrpE are required for fully efficient folding. Also involved, together with DnaK and GrpE, in the DNA replication of plasmids through activation of initiation proteins. This Shewanella sp. (strain ANA-3) protein is Chaperone protein DnaJ.